The following is a 190-amino-acid chain: Prostaglandin-H2 D-isomerase (190 aa).

The N-terminal stretch at 1 to 22 (MATHHTLWMGLALLGVLGDLQA) is a signal peptide. O-linked (GalNAc...) serine glycosylation occurs at S29. An N-linked (GlcNAc...) (complex) asparagine glycan is attached at N51. C65 (nucleophile) is an active-site residue. The N-linked (GlcNAc...) (complex) asparagine glycan is linked to N78. Cysteines 89 and 186 form a disulfide.

It belongs to the calycin superfamily. Lipocalin family. In terms of assembly, monomer. In terms of processing, N- and O-glycosylated. Both N-glycosylation recognition sites are almost quantitatively occupied by N-glycans of the biantennary complex type, with a considerable proportion of structures bearing a bisecting GlcNAc. N-glycan at Asn-78: dHex1Hex5HexNAc4. Agalacto structure as well as sialylated and nonsialylated oligosaccharides bearing alpha2-3- and/or alpha2-6-linked NeuNAc are present. Abundant in the brain and CNS, where it is expressed in tissues of the blood-brain barrier and secreted into the cerebro-spinal fluid. Abundantly expressed in the heart. In the male reproductive system, it is expressed in the testis, epididymis and prostate, and is secreted into the seminal fluid. Expressed in the eye and secreted into the aqueous humor. Lower levels detected in various tissue fluids such as serum, normal urine, ascitic fluid and tear fluid. Also found in a number of other organs including ovary, fimbriae of the fallopian tubes, kidney, leukocytes.

The protein localises to the rough endoplasmic reticulum. It localises to the nucleus membrane. The protein resides in the golgi apparatus. Its subcellular location is the cytoplasm. It is found in the perinuclear region. The protein localises to the secreted. The catalysed reaction is prostaglandin H2 = prostaglandin D2. Its function is as follows. Catalyzes the conversion of PGH2 to PGD2, a prostaglandin involved in smooth muscle contraction/relaxation and a potent inhibitor of platelet aggregation. Involved in a variety of CNS functions, such as sedation, NREM sleep and PGE2-induced allodynia, and may have an anti-apoptotic role in oligodendrocytes. Binds small non-substrate lipophilic molecules, including biliverdin, bilirubin, retinal, retinoic acid and thyroid hormone, and may act as a scavenger for harmful hydrophobic molecules and as a secretory retinoid and thyroid hormone transporter. Possibly involved in development and maintenance of the blood-brain, blood-retina, blood-aqueous humor and blood-testis barrier. It is likely to play important roles in both maturation and maintenance of the central nervous system and male reproductive system. Involved in PLA2G3-dependent maturation of mast cells. PLA2G3 is secreted by immature mast cells and acts on nearby fibroblasts upstream to PTDGS to synthesize PGD2, which in turn promotes mast cell maturation and degranulation via PTGDR. The polypeptide is Prostaglandin-H2 D-isomerase (PTGDS) (Homo sapiens (Human)).